The following is a 424-amino-acid chain: Serine hydroxymethyltransferase 2 (424 aa).

Residues Leu125 and 129–131 (GHL) each bind (6S)-5,6,7,8-tetrahydrofolate. Lys234 carries the post-translational modification N6-(pyridoxal phosphate)lysine. Glu250 is a binding site for (6S)-5,6,7,8-tetrahydrofolate.

It belongs to the SHMT family. As to quaternary structure, homodimer. The cofactor is pyridoxal 5'-phosphate.

It is found in the cytoplasm. The catalysed reaction is (6R)-5,10-methylene-5,6,7,8-tetrahydrofolate + glycine + H2O = (6S)-5,6,7,8-tetrahydrofolate + L-serine. It participates in one-carbon metabolism; tetrahydrofolate interconversion. It functions in the pathway amino-acid biosynthesis; glycine biosynthesis; glycine from L-serine: step 1/1. Its function is as follows. Catalyzes the reversible interconversion of serine and glycine with tetrahydrofolate (THF) serving as the one-carbon carrier. This reaction serves as the major source of one-carbon groups required for the biosynthesis of purines, thymidylate, methionine, and other important biomolecules. Also exhibits THF-independent aldolase activity toward beta-hydroxyamino acids, producing glycine and aldehydes, via a retro-aldol mechanism. In Burkholderia mallei (strain ATCC 23344), this protein is Serine hydroxymethyltransferase 2.